The sequence spans 556 residues: Small ribosomal subunit protein uS3m (556 aa).

The protein belongs to the universal ribosomal protein uS3 family. Component of the mitochondrial ribosome small subunit.

It is found in the mitochondrion. The chain is Small ribosomal subunit protein uS3m (RPS3) from Arabidopsis thaliana (Mouse-ear cress).